A 391-amino-acid polypeptide reads, in one-letter code: Succinate--CoA ligase [ADP-forming] subunit beta (391 aa).

In terms of domain architecture, ATP-grasp spans 9–246 (KHLFTEAGIA…LTQEDETEVR (238 aa)). ATP is bound by residues Lys-46, 53–55 (GRG), Glu-99, Leu-102, and Glu-107. Mg(2+) contacts are provided by Asn-199 and Asp-213. Substrate is bound by residues Asn-266 and 323 to 325 (GIV).

The protein belongs to the succinate/malate CoA ligase beta subunit family. As to quaternary structure, heterotetramer of two alpha and two beta subunits. Requires Mg(2+) as cofactor.

The catalysed reaction is succinate + ATP + CoA = succinyl-CoA + ADP + phosphate. It carries out the reaction GTP + succinate + CoA = succinyl-CoA + GDP + phosphate. It participates in carbohydrate metabolism; tricarboxylic acid cycle; succinate from succinyl-CoA (ligase route): step 1/1. In terms of biological role, succinyl-CoA synthetase functions in the citric acid cycle (TCA), coupling the hydrolysis of succinyl-CoA to the synthesis of either ATP or GTP and thus represents the only step of substrate-level phosphorylation in the TCA. The beta subunit provides nucleotide specificity of the enzyme and binds the substrate succinate, while the binding sites for coenzyme A and phosphate are found in the alpha subunit. The chain is Succinate--CoA ligase [ADP-forming] subunit beta from Halorhodospira halophila (strain DSM 244 / SL1) (Ectothiorhodospira halophila (strain DSM 244 / SL1)).